Reading from the N-terminus, the 370-residue chain is Allatostatins (370 aa).

The signal sequence occupies residues M1–G27. A propeptide spanning residues T28–V65 is cleaved from the precursor. Residues A29 to D58 form a disordered region. 4 positions are modified to leucine amide: L73, L94, L105, and L117. Positions D121–D151 are excised as a propeptide. Residues L161, L172, L188, L200, L213, and L232 each carry the leucine amide modification. Residues S236–D251 constitute a propeptide that is removed on maturation. L264 carries the leucine amide modification. Positions E268–V345 are excised as a propeptide. The tract at residues E273–H298 is disordered. Position 353 is a leucine amide (L353). I364 carries the isoleucine amide modification. Positions S368–R370 are excised as a propeptide.

It belongs to the allatostatin family. As to expression, brain, subesophageal ganglion and corpus allatum.

It is found in the secreted. Its function is as follows. Neuropeptide inhibitors of juvenile hormone synthesis and gut muscle contraction. The chain is Allatostatins from Diploptera punctata (Pacific beetle cockroach).